Here is a 63-residue protein sequence, read N- to C-terminus: H/ACA ribonucleoprotein complex subunit 3-like protein (63 aa).

A disordered region spans residues 18-40; sequence KMDPEGKPTLSAHPARFSPDDKY.

This sequence belongs to the NOP10 family. Component of the small nucleolar ribonucleoprotein particles containing H/ACA-type snoRNAs (H/ACA snoRNPs).

It localises to the nucleus. It is found in the nucleolus. Its function is as follows. Required for ribosome biogenesis. Part of a complex which catalyzes pseudouridylation of rRNA. This involves the isomerization of uridine such that the ribose is subsequently attached to C5, instead of the normal N1. Pseudouridine ('psi') residues may serve to stabilize the conformation of rRNAs. The protein is H/ACA ribonucleoprotein complex subunit 3-like protein of Trypanosoma cruzi.